Reading from the N-terminus, the 875-residue chain is Alanine--tRNA ligase (875 aa).

Histidine 564, histidine 568, cysteine 666, and histidine 670 together coordinate Zn(2+).

Belongs to the class-II aminoacyl-tRNA synthetase family. In terms of assembly, homotetramer. Zn(2+) serves as cofactor.

It localises to the cytoplasm. The catalysed reaction is tRNA(Ala) + L-alanine + ATP = L-alanyl-tRNA(Ala) + AMP + diphosphate. Functionally, catalyzes the attachment of alanine to tRNA(Ala) in a two-step reaction: alanine is first activated by ATP to form Ala-AMP and then transferred to the acceptor end of tRNA(Ala). Also edits incorrectly charged Ser-tRNA(Ala) and Gly-tRNA(Ala) via its editing domain. The protein is Alanine--tRNA ligase of Pectobacterium atrosepticum (strain SCRI 1043 / ATCC BAA-672) (Erwinia carotovora subsp. atroseptica).